The sequence spans 330 residues: tRNA U34 carboxymethyltransferase (330 aa).

Carboxy-S-adenosyl-L-methionine-binding positions include Lys91, Trp105, Lys110, Gly130, 152–154 (DPS), 181–182 (IE), Met196, Tyr200, and Arg315.

This sequence belongs to the class I-like SAM-binding methyltransferase superfamily. CmoB family. As to quaternary structure, homotetramer.

The catalysed reaction is carboxy-S-adenosyl-L-methionine + 5-hydroxyuridine(34) in tRNA = 5-carboxymethoxyuridine(34) in tRNA + S-adenosyl-L-homocysteine + H(+). Its function is as follows. Catalyzes carboxymethyl transfer from carboxy-S-adenosyl-L-methionine (Cx-SAM) to 5-hydroxyuridine (ho5U) to form 5-carboxymethoxyuridine (cmo5U) at position 34 in tRNAs. The protein is tRNA U34 carboxymethyltransferase of Shewanella woodyi (strain ATCC 51908 / MS32).